The primary structure comprises 206 residues: Ion-translocating oxidoreductase complex subunit G (206 aa).

A helical transmembrane segment spans residues 9–29; it reads GITLALFAAGSTGLTAVINQM. An FMN phosphoryl threonine modification is found at threonine 174.

It belongs to the RnfG family. In terms of assembly, the complex is composed of six subunits: RsxA, RsxB, RsxC, RsxD, RsxE and RsxG. FMN serves as cofactor.

The protein resides in the cell inner membrane. Functionally, part of a membrane-bound complex that couples electron transfer with translocation of ions across the membrane. Required to maintain the reduced state of SoxR. In Salmonella typhi, this protein is Ion-translocating oxidoreductase complex subunit G.